The following is a 434-amino-acid chain: Eukaryotic translation initiation factor 3 subunit E-2 (434 aa).

A PCI domain is found at 219-392; it reads FFNHPKGRDL…GHVVMGTQPL (174 aa).

The protein belongs to the eIF-3 subunit E family. As to quaternary structure, component of the eukaryotic translation initiation factor 3 (eIF-3) complex. The eIF-3 complex interacts with pix. Interacts with mxt.

It localises to the cytoplasm. Functionally, component of the eukaryotic translation initiation factor 3 (eIF-3) complex, which is involved in protein synthesis of a specialized repertoire of mRNAs and, together with other initiation factors, stimulates binding of mRNA and methionyl-tRNAi to the 40S ribosome. The eIF-3 complex specifically targets and initiates translation of a subset of mRNAs involved in cell proliferation. This is Eukaryotic translation initiation factor 3 subunit E-2 (eIF3-S6-2) from Drosophila willistoni (Fruit fly).